Reading from the N-terminus, the 841-residue chain is Protein translocase subunit SecA (841 aa).

ATP is bound by residues 79-80 (MF), Gln85, 103-107 (GEGKT), and Asp492. Residues 786 to 813 (REEVVQGQTTAHQPQEGDDNKKAKKAPV) are disordered. Cys825, Cys827, Cys836, and Cys837 together coordinate Zn(2+).

Belongs to the SecA family. Part of the essential Sec protein translocation apparatus which comprises SecA, SecYEG and auxiliary proteins SecDF. Other proteins may be involved. Monomer and many different homodimers can be isolated, some of which are not formed in the presence of a synthetic signal peptide. A single SecA monomer interacts with SecY in the channel. Only shows some colocalization with FloA or FloT membrane assemblies. Requires Zn(2+) as cofactor.

The protein localises to the cell membrane. It is found in the cytoplasm. It localises to the membrane raft. The enzyme catalyses ATP + H2O + cellular proteinSide 1 = ADP + phosphate + cellular proteinSide 2.. Its function is as follows. Part of the Sec protein translocase complex. Interacts with the SecYEG preprotein conducting channel. Has a central role in coupling the hydrolysis of ATP to the transfer of proteins into and across the cell membrane, serving as an ATP-driven molecular motor driving the stepwise translocation of polypeptide chains across the membrane. In Bacillus subtilis (strain 168), this protein is Protein translocase subunit SecA.